The primary structure comprises 147 residues: Biogenesis of lysosome-related organelles complex 1 subunit 1 (147 aa).

2 disordered regions span residues 1 to 25 (MLTS…VRRK) and 125 to 147 (SSGA…PSAT).

This sequence belongs to the BLOC1S1 family. Component of the biogenesis of lysosome-related organelles complex-1 (BLOC-1) composed of Blos1, Blos2, Blos3, Blos4, Dysb, Muted, Pldn and Snapin. Interacts with Pldn.

In terms of biological role, component of the biogenesis of lysosome-related organelles complex-1 (BLOC-1) involved in pigment granule biogenesis and membrane trafficking in synapses. In response to high synaptic activity at neuromuscular junctions, stabilizes Pldn protein levels and, together with Pldn, plays a role in promoting efficient synaptic vesicle recycling and re-formation through early endosomes. This chain is Biogenesis of lysosome-related organelles complex 1 subunit 1, found in Drosophila melanogaster (Fruit fly).